Reading from the N-terminus, the 249-residue chain is Short-chain dehydrogenase virB (249 aa).

Residues Ile-16, Arg-104, Tyr-150, Lys-154, Val-183, and Thr-185 each coordinate NADP(+). The active-site Proton donor is the Tyr-150. Lys-154 functions as the Lowers pKa of active site Tyr in the catalytic mechanism.

It belongs to the short-chain dehydrogenases/reductases (SDR) family.

Its pathway is secondary metabolite biosynthesis. In terms of biological role, short-chain dehydrogenase; part of the gene cluster that mediates the biosynthesis of virensols and trichoxide, fungal natural products that contain or are derived from a salicylaldehyde core. The pathway begins with the synthesis of the reduced chain in virensol C by the highly reducing polyketide synthase virA via condensation of one acetate and 8 malonate units. VirA has interesting programming rules since the first 2 ketides are fully reduced, the 3 following ketides undergo beta-dehydration, and the last 3 ketides are only reduced to beta-hydroxys to yield the trihydroxy portion. The production of aldehyde virensol C by virA alone is surprising, since virA does not contain a reductase (R) domain that is typically associated with reductive product release in HRPKS. The cupin-domain enzyme virC is involved in enhancing virA product turnover. The short-chain dehydrogenase virB then oxidizes the C-7 alcohol of virensol C to a ketone, yielding virensol D. Virensol D is further transformed to salicylaldehyde 5-deoxyaurocitrin by the short-chain dehydrogenase virD. VirD catalyzes the dehydrogenation of C-3 to form the beta-ketone aldehyde, which is followed by the generation of the nucleophilic C-2 that is required for the intramolecular aldol condensation between C-2 and C-7, itself followed by dehydration and aromatization which leads to salicylaldehyde 5-deoxyaurocitrin. While the dehydrogenation of virensol D is definitely catalyzed by virD, the aldol condensation and dehydration may be uncatalyzed or assisted by virD. The short chain dehydrogenase virG then converts salicylaldehyde 5-deoxyaurocitrin into virensol B which is further hydroxylated by the cytochrome P450 monooxygenase virE to yield the hydroquinone virensol A. VirI then may oxidize virensol A to form the quinone, while virH performs the epoxidation. Finally, the two remaining short-chain dehydrogenases, virK and virL, are probably responsible for reducing the ketones to the corresponding alcohols to furnish the epoxycyclohexanol structure in trichoxide. The protein is Short-chain dehydrogenase virB of Hypocrea virens (strain Gv29-8 / FGSC 10586) (Gliocladium virens).